A 257-amino-acid polypeptide reads, in one-letter code: Nuclear receptor subfamily 0 group B member 2 (257 aa).

The NR LBD domain occupies 16 to 257 (SRPAILYALL…GLLGDMLLLR (242 aa)). Arg-57 is modified (symmetric dimethylarginine; by PRMT5).

The protein belongs to the nuclear hormone receptor family. NR0 subfamily. As to quaternary structure, interacts (via N-terminus) with NEUROD1 (via N-terminus and C-terminus). Interacts with ID2. Interacts with RORG, NFIL3, NR1D1 and BHLHE41. Heterodimer; efficient DNA binding requires dimerization with another bHLH protein. Interacts with RARA, RXRA, THRB, NR5A1, NR5A2, NR1I3, PPARA, PPARG and EID1. Interacts with HNF4A; the resulting heterodimer is transcriptionally inactive. Interacts with DDX3X; this interaction disrupts the interaction between HNF4 and NR0B2/SHP that forms inactive heterodimers and enhances the formation of active HNF4 homodimers. Arginine methylation by PRMT5 enhances repression activity of metabolic genes in liver in response to bile acid signaling, by increasing interaction with cofactors. Liver. Low levels of expression were detected in heart and pancreas.

It localises to the nucleus. Its subcellular location is the cytoplasm. Functionally, transcriptional regulator that acts as a negative regulator of receptor-dependent signaling pathways. Specifically inhibits transactivation of the nuclear receptor with which it interacts. Inhibits transcriptional activity of NEUROD1 on E-box-containing promoter by interfering with the coactivation function of the p300/CBP-mediated transcription complex for NEUROD1. Essential component of the liver circadian clock which via its interaction with NR1D1 and RORG regulates NPAS2-mediated hepatic lipid metabolism. Regulates the circadian expression of cytochrome P450 (CYP) enzymes. Represses: NR5A2 and HNF4A to down-regulate CYP2C38, NFLI3 to up-regulate CYP2A5, BHLHE41/HNF1A axis to up-regulate CYP1A2, CYP2E1 and CYP3A11, and NR1D1 to up-regulate CYP2B10, CYP4A10 and CYP4A14. The chain is Nuclear receptor subfamily 0 group B member 2 (NR0B2) from Homo sapiens (Human).